Reading from the N-terminus, the 278-residue chain is 4-deoxy-L-threo-5-hexosulose-uronate ketol-isomerase (278 aa).

Residues histidine 196, histidine 198, glutamate 203, and histidine 245 each coordinate Zn(2+).

This sequence belongs to the KduI family. Homohexamer. It depends on Zn(2+) as a cofactor.

The catalysed reaction is 5-dehydro-4-deoxy-D-glucuronate = 3-deoxy-D-glycero-2,5-hexodiulosonate. Its pathway is glycan metabolism; pectin degradation; 2-dehydro-3-deoxy-D-gluconate from pectin: step 4/5. Catalyzes the isomerization of 5-dehydro-4-deoxy-D-glucuronate to 3-deoxy-D-glycero-2,5-hexodiulosonate. The chain is 4-deoxy-L-threo-5-hexosulose-uronate ketol-isomerase from Escherichia coli O127:H6 (strain E2348/69 / EPEC).